The chain runs to 494 residues: Leucine-rich repeat extensin-like protein 4 (494 aa).

Positions 1–25 are cleaved as a signal peptide; that stretch reads MKNNTTQSLLLLLLFFFFFFEISHS. N-linked (GlcNAc...) asparagine glycosylation is found at Asn-60, Asn-94, and Asn-106. LRR repeat units lie at residues 121-145, 146-168, 169-193, 194-217, 219-240, 242-263, 264-287, 289-311, and 312-335; these read IRTV…LGLL, TDLA…KFKQ, LKLL…VLHL, PSLK…LFSK, LDAI…FGDS, VSVI…LVEM, KNLN…IGRL, NVTV…VGGM, and VEVE…ICQL. N-linked (GlcNAc...) asparagine glycosylation occurs at Asn-289. N-linked (GlcNAc...) asparagine glycosylation is present at Asn-340. Positions 404–494 are contains the Ser-Pro(4) repeats; it reads SPPIVALPPP…YASPPPPPFY (91 aa). Pro residues predominate over residues 422-479; the sequence is PPVYSPPPSPPVFSPPPSPPVYSPPPPPSIHYSSPPPPPVHHSSPPPPSPEFEGPLPP. Positions 422–482 are disordered; the sequence is PPVYSPPPSP…FEGPLPPVIG (61 aa).

Post-translationally, hydroxylated on proline residues in the S-P-P-P-P repeat. In terms of processing, O-glycosylated on hydroxyprolines. In terms of tissue distribution, expressed in roots, stems, leaves and flowers, mostly in vascular tissues.

The protein localises to the secreted. Its subcellular location is the cell wall. Its function is as follows. Modulates cell morphogenesis by regulating cell wall formation and assembly, and/or growth polarization. This is Leucine-rich repeat extensin-like protein 4 (LRX4) from Arabidopsis thaliana (Mouse-ear cress).